Here is a 533-residue protein sequence, read N- to C-terminus: MNDFWQHCSALLERELTPQQYVTWIKPLAPVAFDAAANTLSIAAPNRFKLDWVKSQFSGRISDLARDFWNAPIEVQFVLDPKAGQRSPAGATPLAPRAPLPSANPAPVAPGPACAPAVDAHAPAPAGMNAATAAAVAAAQAAQAAQANAAALNADEAADLDLPSLTAHEAAAGRRTWRPGAANANSEAADSMYERSKLNPVLTFDNFVTGKANQLARAAAIQVADNPGISYNPLFLYGGVGLGKTHLIHAIGNQLLLDKPGARIRYIHAEQYVSDVVKAYQRKAFDDFKRYYHSLDLLLIDDIQFFSGKSRTQEEFFYAFEALVANKAQVIITSDTYPKEISGIDDRLISRFDSGLTVAIEPPELEMRVAILMRKAQSEGVSLSEDVAFFVAKHLRSNVRELEGALRKILAYSKFHGREITIELTKEALKDLLTVQNRQISVENIQKTVADFYNIKVADMYSKKRPANIARPRQIAMYLAKELTQKSLPEIGELFGGRDHTTVLHAVRKIADERGKDAQLNHELHVLEQTLKG.

Residues 1–72 (MNDFWQHCSA…DLARDFWNAP (72 aa)) are domain I, interacts with DnaA modulators. The tract at residues 72–196 (PIEVQFVLDP…EAADSMYERS (125 aa)) is domain II. Positions 83-113 (AGQRSPAGATPLAPRAPLPSANPAPVAPGPA) are disordered. Residues 96 to 110 (PRAPLPSANPAPVAP) are compositionally biased toward pro residues. The segment at 197 to 413 (KLNPVLTFDN…GALRKILAYS (217 aa)) is domain III, AAA+ region. The ATP site is built by glycine 241, glycine 243, lysine 244, and threonine 245. The domain IV, binds dsDNA stretch occupies residues 414–533 (KFHGREITIE…LHVLEQTLKG (120 aa)).

It belongs to the DnaA family. Oligomerizes as a right-handed, spiral filament on DNA at oriC.

The protein resides in the cytoplasm. Plays an essential role in the initiation and regulation of chromosomal replication. ATP-DnaA binds to the origin of replication (oriC) to initiate formation of the DNA replication initiation complex once per cell cycle. Binds the DnaA box (a 9 base pair repeat at the origin) and separates the double-stranded (ds)DNA. Forms a right-handed helical filament on oriC DNA; dsDNA binds to the exterior of the filament while single-stranded (ss)DNA is stabiized in the filament's interior. The ATP-DnaA-oriC complex binds and stabilizes one strand of the AT-rich DNA unwinding element (DUE), permitting loading of DNA polymerase. After initiation quickly degrades to an ADP-DnaA complex that is not apt for DNA replication. Binds acidic phospholipids. This is Chromosomal replication initiator protein DnaA from Burkholderia mallei (strain SAVP1).